We begin with the raw amino-acid sequence, 462 residues long: Arginine biosynthesis bifunctional protein ArgJ, mitochondrial (462 aa).

Substrate-binding residues include threonine 189, lysine 215, threonine 236, glutamate 327, asparagine 457, and serine 462. The active-site Nucleophile is threonine 236.

It belongs to the ArgJ family. Heterodimer of an alpha and a beta chain. In terms of processing, the alpha and beta chains are autoproteolytically processed from a single precursor protein within the mitochondrion.

The protein localises to the mitochondrion matrix. It catalyses the reaction N(2)-acetyl-L-ornithine + L-glutamate = N-acetyl-L-glutamate + L-ornithine. The enzyme catalyses L-glutamate + acetyl-CoA = N-acetyl-L-glutamate + CoA + H(+). Its pathway is amino-acid biosynthesis; L-arginine biosynthesis; L-ornithine and N-acetyl-L-glutamate from L-glutamate and N(2)-acetyl-L-ornithine (cyclic): step 1/1. It participates in amino-acid biosynthesis; L-arginine biosynthesis; N(2)-acetyl-L-ornithine from L-glutamate: step 1/4. Its function is as follows. Catalyzes two activities which are involved in the cyclic version of arginine biosynthesis: the synthesis of acetylglutamate from glutamate and acetyl-CoA, and of ornithine by transacetylation between acetylornithine and glutamate. This chain is Arginine biosynthesis bifunctional protein ArgJ, mitochondrial, found in Postia placenta (strain ATCC 44394 / Madison 698-R) (Brown rot fungus).